The following is a 183-amino-acid chain: Inosine/xanthosine triphosphatase (183 aa).

Aspartate 75 contacts Mg(2+). 75-76 (DG) is a substrate binding site.

Belongs to the YjjX NTPase family. In terms of assembly, homodimer. It depends on Mg(2+) as a cofactor. The cofactor is Mn(2+).

The enzyme catalyses XTP + H2O = XDP + phosphate + H(+). The catalysed reaction is ITP + H2O = IDP + phosphate + H(+). Its function is as follows. Phosphatase that hydrolyzes non-canonical purine nucleotides such as XTP and ITP to their respective diphosphate derivatives. Probably excludes non-canonical purines from DNA/RNA precursor pool, thus preventing their incorporation into DNA/RNA and avoiding chromosomal lesions. The protein is Inosine/xanthosine triphosphatase of Vibrio vulnificus (strain YJ016).